The sequence spans 196 residues: uncharacterized protein (196 aa).

This is an uncharacterized protein from Saccharolobus islandicus (Sulfolobus islandicus).